The following is a 547-amino-acid chain: MIDLFAIVNKGGIVLWKKTNSLVNLKCLQVLFHEAFLSEQRTVNNTVTFDRYTMQYQEATQYSIVFVVVFQDLKCMAYSQSLLNSAHNIFLNLFKEKLEDRQVPNEAEVEKLFAPIFNRKSAQLENETDTKSLPVEANNDNSARKKNEYEMKKKGAQSKQTNAPKKGKKQLRKWDDQITEEEQAALNYSSQASSASQTVDNSQLSSIVGNNNKFQKTGSGDVIISDLEMDPNQTISNKSASSAFSLFSNLIGGKYLKEEDLSPILKQMQEHLTKKNVANSIALELCESVKASLINKKVGSFDTVKNTVNKAFRDRLTQILTPSTSLDLLHSIRSVRKNENRPYTISLIGVNGVGKSTTLAKIAYWLLSNNFRILVAACDTFRSGAIEQLGVHVKNLQSLKGSSIELFAQGYGKDSSFVVKNAVEYAKQNSFDVILIDTAGRRHNDQRLMGSLEKFTKATKLDKIFQVAEALVGTDSLAQAKHFQASLYHRPLDGFIISKVDTVGQLVGVMVGMVYAVRVPIIFVGIGQTYSDLRTLSVDWVVDQLMK.

The disordered stretch occupies residues 124-174; sequence LENETDTKSLPVEANNDNSARKKNEYEMKKKGAQSKQTNAPKKGKKQLRKW. The span at 142 to 153 shows a compositional bias: basic and acidic residues; sequence SARKKNEYEMKK. Residues 343–546 are NG domain; the sequence is YTISLIGVNG…SVDWVVDQLM (204 aa). GTP contacts are provided by residues 349–356, 437–441, and 498–501; these read GVNGVGKS, DTAGR, and SKVD.

The protein belongs to the GTP-binding SRP family. Heterodimer of an alpha and a beta chain.

It localises to the endoplasmic reticulum membrane. Component of the SRP (signal recognition particle) receptor (SR). Ensures, in conjunction with the signal recognition particle, the correct targeting of the nascent secretory proteins to the endoplasmic reticulum membrane system. GTP hydrolysis may enhance the fidelity of and provide unidirectionality to the targeting reaction. This Schizosaccharomyces pombe (strain 972 / ATCC 24843) (Fission yeast) protein is Signal recognition particle receptor subunit alpha homolog (srp101).